The sequence spans 203 residues: Nucleoside triphosphate pyrophosphatase (203 aa).

Asp80 acts as the Proton acceptor in catalysis.

The protein belongs to the Maf family. The cofactor is a divalent metal cation.

It localises to the cytoplasm. It catalyses the reaction a ribonucleoside 5'-triphosphate + H2O = a ribonucleoside 5'-phosphate + diphosphate + H(+). The catalysed reaction is a 2'-deoxyribonucleoside 5'-triphosphate + H2O = a 2'-deoxyribonucleoside 5'-phosphate + diphosphate + H(+). Nucleoside triphosphate pyrophosphatase. May have a dual role in cell division arrest and in preventing the incorporation of modified nucleotides into cellular nucleic acids. This Gluconobacter oxydans (strain 621H) (Gluconobacter suboxydans) protein is Nucleoside triphosphate pyrophosphatase.